The sequence spans 393 residues: High mobility group protein DSP1 (393 aa).

The tract at residues 153–179 (QMQQQQQQQNVINSASPMSRVKADAKP) is disordered. DNA-binding regions (HMG box) lie at residues 179-249 (PRGR…QNYV) and 271-339 (PKRS…TEYK). The span at 364–374 (LLAAAAQQQHQ) shows a compositional bias: low complexity. The tract at residues 364 to 393 (LLAAAAQQQHQQLEEQHDDDDGDGDDDENQ) is disordered. The span at 379 to 393 (QHDDDDGDGDDDENQ) shows a compositional bias: acidic residues.

It belongs to the HMGB family.

The protein localises to the nucleus. Its subcellular location is the chromosome. Functionally, binds preferentially single-stranded DNA and unwinds double-stranded DNA. This is High mobility group protein DSP1 (Dsp1) from Drosophila melanogaster (Fruit fly).